We begin with the raw amino-acid sequence, 257 residues long: 3-deoxy-manno-octulosonate cytidylyltransferase (257 aa).

It belongs to the KdsB family.

The protein resides in the cytoplasm. The enzyme catalyses 3-deoxy-alpha-D-manno-oct-2-ulosonate + CTP = CMP-3-deoxy-beta-D-manno-octulosonate + diphosphate. It functions in the pathway nucleotide-sugar biosynthesis; CMP-3-deoxy-D-manno-octulosonate biosynthesis; CMP-3-deoxy-D-manno-octulosonate from 3-deoxy-D-manno-octulosonate and CTP: step 1/1. The protein operates within bacterial outer membrane biogenesis; lipopolysaccharide biosynthesis. Functionally, activates KDO (a required 8-carbon sugar) for incorporation into bacterial lipopolysaccharide in Gram-negative bacteria. This Chromohalobacter salexigens (strain ATCC BAA-138 / DSM 3043 / CIP 106854 / NCIMB 13768 / 1H11) protein is 3-deoxy-manno-octulosonate cytidylyltransferase.